We begin with the raw amino-acid sequence, 658 residues long: Scarecrow-like protein 28 (658 aa).

3 disordered regions span residues P43 to C85, L96 to R115, and P209 to R265. Over residues E214 to R228 the composition is skewed to low complexity. The GRAS domain maps to R265–T654. The leucine repeat I (LRI) stretch occupies residues F272 to H336. A VHIID region spans residues L355–G420. A VHIID motif is present at residues V386–D390. Residues E430–M462 are leucine repeat II (LRII). The segment at V471–N563 is PFYRE. The SAW stretch occupies residues A566–T654.

The protein belongs to the GRAS family. In terms of assembly, interacts with SNRNP35 and CYP95. Expressed in roots and sepals.

The protein localises to the nucleus. Functionally, probable transcription factor involved in plant development. This Arabidopsis thaliana (Mouse-ear cress) protein is Scarecrow-like protein 28 (SCL28).